The chain runs to 901 residues: MLIKLLTKVFGSRNDRTLRRMRKAVSLINAMEPEMEKLSDDELKAKTNEFRARIGKGESVESLIPEAFAVVREASKRVFGMRHFDVQLLGGMVLNDRCIAEMRTGEGKTLTATLPAYLNALSGKGVHVVTVNDYLAQRDAENNRPLFEFLGMSVGINLPGMPAPAKREAYAADITYGTNNEYGFDYLRDNMAFSPEERVQRKLHYALVDEVDSILIDEARTPLIISGPAEDSSEMYKKVNKIIPHLIRQEKEDSDTFQGEGHFSVDEKARQVNLTERGLVLIEELLVQEGIMDEGESLYSPGNIMLMHHVTAALRAHALFTRDVDYIVKDGEVIIVDEHTGRTMQGRRWSDGLHQAVEAKEGVEIQNENQTLASITFQNYFRLYEKLAGMTGTADTEAFEFSSIYKLDTVVVPTNRPMIRKDLPDLVYITEAEKIQAIIEDIKERTANGQPVLVGTISIEKSEVVSRELTKAGIKHNVLNAKFHANEAGIVAQAGYPAAVTIATNMAGRGTDIMLGGSWQAEVAALEAPTEEQIAQIKADWQVRHDAVLAAGGLHIIGTERHESRRIDNQLRGRSGRQGDPGSSRFYLSMEDALMRIFASDRVSGMMRKLGMKPGEAIEHPWVTKAIANAQRKVESRNFDIRKQLLEYDDVANDQRRAIYTQRNELLDVSDVSDTINSIREDVFKATIDAYIPPQSLEEMWDIPGLQERLKNDFDLEMPIAEWLDKEPELHEETLRERILAQSIEVYQRKEEVVGAEMMRHFEKGVMLQTLDSLWKEHLAAMDYLRQGIHLRGYAQKDPKQEYKRESFAMFAAMLESLKYEVISTLSKVQVRMPEEVEAMEMQRREEAERLAQMQQLSHQDDDAAVAADLAAQTGERKIGRNDPCPCGSGKKYKQCHGRLS.

ATP-binding positions include Gln87, 105-109, and Asp512; that span reads GEGKT. Residues Cys885, Cys887, Cys896, and His897 each contribute to the Zn(2+) site.

The protein belongs to the SecA family. Monomer and homodimer. Part of the essential Sec protein translocation apparatus which comprises SecA, SecYEG and auxiliary proteins SecDF-YajC and YidC. Zn(2+) is required as a cofactor.

It is found in the cell inner membrane. The protein localises to the cytoplasm. The catalysed reaction is ATP + H2O + cellular proteinSide 1 = ADP + phosphate + cellular proteinSide 2.. Part of the Sec protein translocase complex. Interacts with the SecYEG preprotein conducting channel. Has a central role in coupling the hydrolysis of ATP to the transfer of proteins into and across the cell membrane, serving both as a receptor for the preprotein-SecB complex and as an ATP-driven molecular motor driving the stepwise translocation of polypeptide chains across the membrane. This chain is Protein translocase subunit SecA, found in Salmonella typhi.